A 292-amino-acid polypeptide reads, in one-letter code: tRNA dimethylallyltransferase (292 aa).

Residue 5–12 (APTGAGKT) participates in ATP binding. 7–12 (TGAGKT) lines the substrate pocket. The interval 29–32 (DSRQ) is interaction with substrate tRNA.

It belongs to the IPP transferase family. In terms of assembly, monomer. Requires Mg(2+) as cofactor.

The enzyme catalyses adenosine(37) in tRNA + dimethylallyl diphosphate = N(6)-dimethylallyladenosine(37) in tRNA + diphosphate. Its function is as follows. Catalyzes the transfer of a dimethylallyl group onto the adenine at position 37 in tRNAs that read codons beginning with uridine, leading to the formation of N6-(dimethylallyl)adenosine (i(6)A). The sequence is that of tRNA dimethylallyltransferase from Leptospira borgpetersenii serovar Hardjo-bovis (strain JB197).